The primary structure comprises 345 residues: MKILFLACLRAHTGNSTTALRIKDHLEAAGHTCVLKDAAILESSEVETLISQEKFNAGLIIQLYKAGRFLMGNRIPFGAIFGGTDINEDVKNEEKCRVMGAVLEEARFVVAFTHKIKELAATKWPHAKHKIHIQPQGILTKPSKSFDYEAFLQNAGIRHKSGHLHLYVLICGLRRVKDPLYLAEMFAKWHEKEPNVYLAIIGPMVDPVFTKEVENKLEEIDGVYLIKEIPQSDLQAVIKRSFALVNSSLSEGMSAAILEAMDLEVPVLARDIPGNSAIIKHEDTGLLFSTPQEFVQLSKRLMTEPELKRRIVSNAKRYVNSNHSWELERDTYQTLILNLQVNGNI.

Residues Met1–Ala19 form the signal peptide. 2 N-linked (GlcNAc...) asparagine glycosylation sites follow: Asn246 and Asn322.

Belongs to the glycosyltransferase group 1 family. Glycosyltransferase 4 subfamily.

The protein localises to the secreted. This Xenopus tropicalis (Western clawed frog) protein is Glycosyltransferase 1 domain-containing protein 1 (glt1d1).